The chain runs to 218 residues: MSLTQQQKDLIFGSLLGDGNLQTGSVGRTWRYRALHKSEHQTYLFHKYEILKPLCGENTLPTESIVFDERTNKEVKRWFFNTLTNPSLKFFADMFYTYDQNTQKWVKDVPVKVQTFLTPQALAYFYIDDGALKWLNKSNAMQICTESFSQGGTIRIQKALKTLYNIDTTLTKKTLQDGRIGYRIAIPEASSGAFREVIKPFLVDCMRYKVSDGNKGHL.

The protein belongs to the LAGLIDADG endonuclease family.

It localises to the plastid. Its subcellular location is the chloroplast. Functionally, probable endonuclease involved in intron homing. Encoded in the group-I intron of the subunit rRNA-encoding gene (rrnL), it generates a staggered cut with 4-nt (CTCG) 3'-OH overhangs 2 bp downstream from the intron insertion site. The chain is DNA endonuclease I-ChuI from Chlamydomonas applanata (Chlamydomonas humicola).